Here is a 739-residue protein sequence, read N- to C-terminus: Phosphoribosylformylglycinamidine synthase subunit PurL (739 aa).

His-54 is a catalytic residue. Residues Tyr-57 and Lys-96 each contribute to the ATP site. Mg(2+) is bound at residue Glu-98. Substrate contacts are provided by residues 99–102 (SHNH) and Arg-121. The active-site Proton acceptor is the His-100. Asp-122 contributes to the Mg(2+) binding site. Gln-245 contacts substrate. A Mg(2+)-binding site is contributed by Asp-273. 317-319 (ESQ) serves as a coordination point for substrate. ATP contacts are provided by Asp-500 and Gly-537. Residue Asn-538 participates in Mg(2+) binding. Residue Ser-540 coordinates substrate.

The protein belongs to the FGAMS family. In terms of assembly, monomer. Part of the FGAM synthase complex composed of 1 PurL, 1 PurQ and 2 PurS subunits.

It localises to the cytoplasm. It carries out the reaction N(2)-formyl-N(1)-(5-phospho-beta-D-ribosyl)glycinamide + L-glutamine + ATP + H2O = 2-formamido-N(1)-(5-O-phospho-beta-D-ribosyl)acetamidine + L-glutamate + ADP + phosphate + H(+). The protein operates within purine metabolism; IMP biosynthesis via de novo pathway; 5-amino-1-(5-phospho-D-ribosyl)imidazole from N(2)-formyl-N(1)-(5-phospho-D-ribosyl)glycinamide: step 1/2. Its function is as follows. Part of the phosphoribosylformylglycinamidine synthase complex involved in the purines biosynthetic pathway. Catalyzes the ATP-dependent conversion of formylglycinamide ribonucleotide (FGAR) and glutamine to yield formylglycinamidine ribonucleotide (FGAM) and glutamate. The FGAM synthase complex is composed of three subunits. PurQ produces an ammonia molecule by converting glutamine to glutamate. PurL transfers the ammonia molecule to FGAR to form FGAM in an ATP-dependent manner. PurS interacts with PurQ and PurL and is thought to assist in the transfer of the ammonia molecule from PurQ to PurL. The sequence is that of Phosphoribosylformylglycinamidine synthase subunit PurL from Bacillus cereus (strain AH187).